A 370-amino-acid polypeptide reads, in one-letter code: UDP-N-acetylglucosamine--N-acetylmuramyl-(pentapeptide) pyrophosphoryl-undecaprenol N-acetylglucosamine transferase (370 aa).

Residues 15 to 17 (TGG), N129, R170, S199, I254, and Q299 each bind UDP-N-acetyl-alpha-D-glucosamine.

The protein belongs to the glycosyltransferase 28 family. MurG subfamily.

Its subcellular location is the cell inner membrane. It catalyses the reaction di-trans,octa-cis-undecaprenyl diphospho-N-acetyl-alpha-D-muramoyl-L-alanyl-D-glutamyl-meso-2,6-diaminopimeloyl-D-alanyl-D-alanine + UDP-N-acetyl-alpha-D-glucosamine = di-trans,octa-cis-undecaprenyl diphospho-[N-acetyl-alpha-D-glucosaminyl-(1-&gt;4)]-N-acetyl-alpha-D-muramoyl-L-alanyl-D-glutamyl-meso-2,6-diaminopimeloyl-D-alanyl-D-alanine + UDP + H(+). It participates in cell wall biogenesis; peptidoglycan biosynthesis. Its function is as follows. Cell wall formation. Catalyzes the transfer of a GlcNAc subunit on undecaprenyl-pyrophosphoryl-MurNAc-pentapeptide (lipid intermediate I) to form undecaprenyl-pyrophosphoryl-MurNAc-(pentapeptide)GlcNAc (lipid intermediate II). In Magnetococcus marinus (strain ATCC BAA-1437 / JCM 17883 / MC-1), this protein is UDP-N-acetylglucosamine--N-acetylmuramyl-(pentapeptide) pyrophosphoryl-undecaprenol N-acetylglucosamine transferase.